A 199-amino-acid polypeptide reads, in one-letter code: Charged multivesicular body protein 1B2 (199 aa).

Residues Ala15–Val47 are a coiled coil. Residues Met132 to Met156 form an interaction with IST1 region. The disordered stretch occupies residues Glu167–Val199. Residues Gln170–Thr183 show a composition bias toward polar residues. Residues Gly174–Val199 are interaction with SPAST. Residues Gly177 to Val199 adopt a coiled-coil conformation. Residues Val180–Arg196 form an interaction with VPS4A, MITD1 and STAMBP region. The interval Val180–Val199 is interaction with VTA1. The interval Thr183–Val199 is interaction with VPS4B. The MIT-interacting motif motif lies at Asp186–Arg196.

The protein belongs to the SNF7 family. In terms of assembly, probable peripherally associated component of the endosomal sorting required for transport complex III (ESCRT-III). ESCRT-III components are thought to multimerize to form a flat lattice on the perimeter membrane of the endosome. Several assembly forms of ESCRT-III may exist that interact and act sequentially. Interacts with CHMP1A. Interacts with VTA1; the interaction probably involves the open conformation of CHMP1B. Interacts with CHMP2A. Interacts with VPS4A; the interaction is direct. Interacts with VPS4B; the interaction is direct. Interacts with SPAST (via MIT domain); the interaction is direct. Interacts with IST1. Interacts with MITD1. Interacts with STAMBP.

The protein localises to the cytoplasm. It is found in the cytosol. Its subcellular location is the endosome. It localises to the late endosome membrane. Its function is as follows. Probable peripherally associated component of the endosomal sorting required for transport complex III (ESCRT-III) which is involved in multivesicular bodies (MVBs) formation and sorting of endosomal cargo proteins into MVBs. MVBs contain intraluminal vesicles (ILVs) that are generated by invagination and scission from the limiting membrane of the endosome and mostly are delivered to lysosomes enabling degradation of membrane proteins, such as stimulated growth factor receptors, lysosomal enzymes and lipids. The MVB pathway appears to require the sequential function of ESCRT-O, -I,-II and -III complexes. ESCRT-III proteins mostly dissociate from the invaginating membrane before the ILV is released. The ESCRT machinery also functions in topologically equivalent membrane fission events, such as the terminal stages of cytokinesis. ESCRT-III proteins are believed to mediate the necessary vesicle extrusion and/or membrane fission activities, possibly in conjunction with the AAA ATPase VPS4. Involved in cytokinesis. Involved in recruiting VPS4A and/or VPS4B and SPAST to the midbody of dividing cells. This chain is Charged multivesicular body protein 1B2, found in Mus musculus (Mouse).